We begin with the raw amino-acid sequence, 55 residues long: Large ribosomal subunit protein bL33B (55 aa).

The protein belongs to the bacterial ribosomal protein bL33 family.

The protein is Large ribosomal subunit protein bL33B of Mycobacteroides abscessus (strain ATCC 19977 / DSM 44196 / CCUG 20993 / CIP 104536 / JCM 13569 / NCTC 13031 / TMC 1543 / L948) (Mycobacterium abscessus).